We begin with the raw amino-acid sequence, 299 residues long: tRNA-cytidine(32) 2-sulfurtransferase (299 aa).

A PP-loop motif motif is present at residues 56-61; the sequence is SGGKDS. The [4Fe-4S] cluster site is built by cysteine 131, cysteine 134, and cysteine 222.

It belongs to the TtcA family. In terms of assembly, homodimer. It depends on Mg(2+) as a cofactor. Requires [4Fe-4S] cluster as cofactor.

It is found in the cytoplasm. It carries out the reaction cytidine(32) in tRNA + S-sulfanyl-L-cysteinyl-[cysteine desulfurase] + AH2 + ATP = 2-thiocytidine(32) in tRNA + L-cysteinyl-[cysteine desulfurase] + A + AMP + diphosphate + H(+). It functions in the pathway tRNA modification. In terms of biological role, catalyzes the ATP-dependent 2-thiolation of cytidine in position 32 of tRNA, to form 2-thiocytidine (s(2)C32). The sulfur atoms are provided by the cysteine/cysteine desulfurase (IscS) system. The sequence is that of tRNA-cytidine(32) 2-sulfurtransferase from Xylella fastidiosa (strain M23).